Consider the following 1353-residue polypeptide: MEQNEFMEAIMYVNGVRRVLPDGLAHMTLLEYLRDLGLTGTKLGCGEGGCGSCTVMVSSYDRESKTCVHYAVNACLAPLYSVEGMHVISIEGVGHRKLGLHPLQESLASSHGSQCGFCTPGFVMSMYALLRSSKNSPSEEEIEECLAGNLCRCTGYRPIIDAFRVFAKSDDALYSGLSSLSLQDGSNICPSTGKPCSCGSKTTSEAATCNEDRFQSISYSDIDGAKYTDKELIFPPELLLRKLAPLKLGGNEGITWYRPVSLQNLLELKANFPDAKLLVGNTEVGIEMRLKRLQYPVLISAAQVPELNALNVNDNGIEVGSALRLSELLRLFRKVVKERPAHETSACKAFIEQLKWFAGTQIRNVACIGGNICTASPISDLNPLWMASRAEFRIINCNGDVRSIPAKDFFLGYRKVDMGSNEILLSVFLPWTRPLEYVKEFKQAHRRDDDIAIVNGGMRVFLEEKGQQLFVSDASIVYGGVAPLSLRARNTEELLIGKNWNKCLLQDALKVIQSDVLIKEGAPGGMVEFRKSLTLSFFFKFFLWVTHHVNNVNPTIETFPPSHMSAVQLVPRFSRIGKQDYETVKQGTSVGLPEVHLSARMQVTGEAEYTDDTPLPPCTLHAALVLSKVPHARILSVDDSAAKSSSGFVGLFLAKDVPGNNMIGPIVADEELFATDVVTCVGQVIGVLVADTHENAKTAARKVDVRYQELPAILSIKEAINAKSFHPNTERRLRKGDVELCFQSGQCDRIIEGEVQMGGQEHFYLEPNGSLVWTIDGGNEVHMISSTQAPQQHQKYVSHVLGLPMSKVVCKTKRLGGGFGGKETRSAFIAAAASVPSYLLNRPVKLILDRDVDMMITGHRHSFVGKYKVGFTNEGKILALDLEIYNNGGNSMDLSLSNLERAMFHSDNVYEIPHVRIVGNVCFTNFPSNTAFRGFGGPQGMLITENWIQRIAAELDKIPEEIKEMNFQVEGSITHYFQSLQHCTLHQLWKELKVSSNFLKTRREADEFNSHNRWKKRGVAMVPTKFGISFTTKFMNQAGALVHVYTDGTVLVTHGGVEMGQGLHTKVAQVAATAFNILLSSVFVSETSTDKVPNASPTAASASSDMYGAAVLDACEQIIARMEPVASKHNFNTFSELASACYFQRIDLSAHGFHIVPELEFDWVSGKGNAYRYYTYGAAFAEVEIDTLTGDFHTRKADIMLDLGYSLNPTIDIGQIEGAFVQGLGWVALEELKWGDAAHKWIKPGSLLTCGPGSYKIPSINDMPFQLNVSLLKGNPNAKAIHSSKAVGEPPFFLAASAFFAIKEAIKAARSEVGLTNWFPLETPATPERIRMACFDEFSAPFANSDFCPKLSV.

Residues Met-7 to Val-93 enclose the 2Fe-2S ferredoxin-type domain. [2Fe-2S] cluster-binding residues include Cys-45, Cys-50, Cys-53, Cys-75, Cys-115, Cys-118, Cys-151, and Cys-153. In terms of domain architecture, FAD-binding PCMH-type spans Gly-249 to Pro-434. FAD is bound by residues Leu-277–Val-284, Phe-357, Cys-367–Asn-371, Asp-380, Leu-424, and Lys-442. Residues Gln-788 and Phe-819 each contribute to the Mo-molybdopterin site. Glu-823 and Arg-901 together coordinate substrate. Mo-molybdopterin is bound at residue Arg-933. Substrate contacts are provided by Phe-935 and Thr-1031. Ala-1100 is a binding site for Mo-molybdopterin. Residue Glu-1289 is the Proton acceptor of the active site.

This sequence belongs to the xanthine dehydrogenase family. In terms of assembly, homodimer. The cofactor is [2Fe-2S] cluster. FAD serves as cofactor. Requires Mo-molybdopterin as cofactor. Expressed in roots, leaves, stems, flowers and siliques.

The enzyme catalyses xanthine + NAD(+) + H2O = urate + NADH + H(+). It carries out the reaction hypoxanthine + NAD(+) + H2O = xanthine + NADH + H(+). Functionally, key enzyme involved in purine catabolism. Catalyzes the oxidation of hypoxanthine to xanthine and the oxidation of xanthine to urate. Regulates the level of ureides and plays a role during plant growth and development and senescence. This is Xanthine dehydrogenase 2 (XDH2) from Arabidopsis thaliana (Mouse-ear cress).